The sequence spans 405 residues: MKNGIAECPACHSKLVSPGSKTISRAYDDHKIRVSSKQRVLNVLLVVGDCMLVGLQPVLVYMSKVDGKFNFSPISVNFLTEIAKVIFAIVMLLIQARHQKVGEKPLLSVSTFVQAARNNVLLAVPALLYAINNYLKFTMQLYFNPATVKMLSNLKVLVIAVLLKMVMKRRFSIIQWEALALLLIGISVNQLRSLPEGATAIGIPLATGAYVCTVIFVTVPSMASVFNEYALKSQYDTSIYLQNLFLYGYGAIFNFLGILGTVIYKGPGSFDILQGHSRATMFLILNNAAQGILSSFFFKYADTILKKYSSTVATIFTGIASAALFGHVITMNFLLGISIVFISMHQFFSPLAKARDEQQQNGNLELGNTKDTHRANESFINMAAGANEEASHRGESDDRTPLLPR.

The Cytoplasmic portion of the chain corresponds to 1–39 (MKNGIAECPACHSKLVSPGSKTISRAYDDHKIRVSSKQR). The chain crosses the membrane as a helical span at residues 40–60 (VLNVLLVVGDCMLVGLQPVLV). Residues 61 to 73 (YMSKVDGKFNFSP) are Lumenal-facing. The helical transmembrane segment at 74–94 (ISVNFLTEIAKVIFAIVMLLI) threads the bilayer. Residues 95 to 142 (QARHQKVGEKPLLSVSTFVQAARNNVLLAVPALLYAINNYLKFTMQLY) lie on the Cytoplasmic side of the membrane. A helical transmembrane segment spans residues 143 to 163 (FNPATVKMLSNLKVLVIAVLL). Residues 164–170 (KMVMKRR) lie on the Lumenal side of the membrane. A helical transmembrane segment spans residues 171–191 (FSIIQWEALALLLIGISVNQL). The Cytoplasmic portion of the chain corresponds to 192–199 (RSLPEGAT). Residues 200 to 220 (AIGIPLATGAYVCTVIFVTVP) traverse the membrane as a helical segment. At 221–243 (SMASVFNEYALKSQYDTSIYLQN) the chain is on the lumenal side. Residues 244–264 (LFLYGYGAIFNFLGILGTVIY) traverse the membrane as a helical segment. Over 265-280 (KGPGSFDILQGHSRAT) the chain is Cytoplasmic. Residues 281–301 (MFLILNNAAQGILSSFFFKYA) form a helical membrane-spanning segment. Residues 302–321 (DTILKKYSSTVATIFTGIAS) are Lumenal-facing. A helical membrane pass occupies residues 322–342 (AALFGHVITMNFLLGISIVFI). The Cytoplasmic portion of the chain corresponds to 343-405 (SMHQFFSPLA…SDDRTPLLPR (63 aa)). The tract at residues 385-405 (GANEEASHRGESDDRTPLLPR) is disordered. Over residues 389–405 (EASHRGESDDRTPLLPR) the composition is skewed to basic and acidic residues.

It belongs to the nucleotide-sugar transporter family. CMP-Sialate:CMP antiporter (TC 2.A.7.12) subfamily.

The protein resides in the golgi apparatus membrane. Sugar transporter involved in the transport of CMP-sialic acid from the cytoplasm into the Golgi. The sequence is that of CMP-sialic acid transporter 3 (UTR6) from Arabidopsis thaliana (Mouse-ear cress).